Reading from the N-terminus, the 2471-residue chain is Histidine protein kinase 1 (2471 aa).

Polar residues predominate over residues 1–10; that stretch reads MSMNFFNSSE. Disordered stretches follow at residues 1–30, 52–75, and 395–415; these read MSMN…TEHY, ETKK…VPPS, and RQGS…FNIG. Residues 11-30 show a composition bias toward basic and acidic residues; that stretch reads PARDHKPDQEKETVMTTEHY. One can recognise a Protein kinase domain in the interval 358 to 636; sequence EHPSQSTDQK…DCHSLLHDLI (279 aa). Residues 2004-2225 form the Histidine kinase domain; it reads NMSHEIRTPF…TFYVSVIMDA (222 aa). His2007 is subject to Phosphohistidine; by autocatalysis. One can recognise a Response regulatory domain in the interval 2340 to 2466; sequence RILLAEDNLL…ELRRILTKVG (127 aa). Asp2394 carries the post-translational modification 4-aspartylphosphate.

In terms of processing, the phosphorelay mechanism involves the sequential transfer of a phosphate group from His-2007 (H1) in the histidine kinase domain (transmitter domain) to Asp-2394 (D1) of the response regulatory domain (receiver domain). This transfer probably occurs between two CHK1 molecules, rather than intramolecularly.

It catalyses the reaction ATP + protein L-histidine = ADP + protein N-phospho-L-histidine.. In terms of biological role, histidine kinase involved in a two-component signaling pathway that regulates cell wall mannan and glucan biosynthesis. Regulates quorum sensing as well as hyphal formation, biofilm formation, chlamidospore formation, and virulence. Plays a prominent role in phagocyte activation. Involved in the covering of the most potent pro-inflammatory cell wall molecules, the beta-glucans, underneath a dense mannan layer, so that the pathogen becomes partly invisible for immune cells such as phagocytes. The protein is Histidine protein kinase 1 (CHK1) of Candida albicans (strain SC5314 / ATCC MYA-2876) (Yeast).